Consider the following 485-residue polypeptide: GTPase Der (485 aa).

EngA-type G domains lie at 3-167 (PTIA…PEPE) and 176-349 (PVFA…NAAM). Residues 9 to 16 (GRPNVGKS), 56 to 60 (DTGGF), 119 to 122 (NKGE), 182 to 189 (GRPNVGKS), 229 to 233 (DTAGV), and 294 to 297 (NKWD) each bind GTP. Residues 350–434 (IKMPTPKITR…PLRIQYNVSE (85 aa)) enclose the KH-like domain. The interval 435-485 (NPYENAEDKPKKKPLRRVSLSNRIEKREGRKEEKNRFKKKTKVSVKKQFSK) is disordered. Residues 457–469 (RIEKREGRKEEKN) show a composition bias toward basic and acidic residues. Positions 470–485 (RFKKKTKVSVKKQFSK) are enriched in basic residues.

Belongs to the TRAFAC class TrmE-Era-EngA-EngB-Septin-like GTPase superfamily. EngA (Der) GTPase family. In terms of assembly, associates with the 50S ribosomal subunit.

Functionally, GTPase that plays an essential role in the late steps of ribosome biogenesis. The sequence is that of GTPase Der from Neisseria gonorrhoeae (strain NCCP11945).